Here is a 562-residue protein sequence, read N- to C-terminus: Protein FAM222B (562 aa).

2 stretches are compositionally biased toward low complexity: residues 147-167 (PQAQALARQQALQHAQTLAHA) and 183-201 (ALSHPQSLQQPQGLGHPQQ). Disordered stretches follow at residues 147 to 242 (PQAQ…PPNV) and 537 to 562 (AHRAPGTRAPDPTDSRSLHIQHPGYR).

This sequence belongs to the FAM222 family.

This Mus musculus (Mouse) protein is Protein FAM222B (Fam222b).